The following is a 342-amino-acid chain: tRNA N6-adenosine threonylcarbamoyltransferase (342 aa).

Residues histidine 111 and histidine 115 each contribute to the Fe cation site. Substrate is bound by residues 133–137 (VVSGG), aspartate 166, glycine 179, aspartate 183, and asparagine 273. Fe cation is bound at residue aspartate 301.

The protein belongs to the KAE1 / TsaD family. It depends on Fe(2+) as a cofactor.

The protein resides in the cytoplasm. The catalysed reaction is L-threonylcarbamoyladenylate + adenosine(37) in tRNA = N(6)-L-threonylcarbamoyladenosine(37) in tRNA + AMP + H(+). Functionally, required for the formation of a threonylcarbamoyl group on adenosine at position 37 (t(6)A37) in tRNAs that read codons beginning with adenine. Is involved in the transfer of the threonylcarbamoyl moiety of threonylcarbamoyl-AMP (TC-AMP) to the N6 group of A37, together with TsaE and TsaB. TsaD likely plays a direct catalytic role in this reaction. This is tRNA N6-adenosine threonylcarbamoyltransferase from Trichlorobacter lovleyi (strain ATCC BAA-1151 / DSM 17278 / SZ) (Geobacter lovleyi).